Consider the following 345-residue polypeptide: NADH-quinone oxidoreductase subunit H (345 aa).

8 helical membrane passes run 14–34 (IILAQVLAVVAFVMISLLFLV), 84–104 (FILAPMTSFVLAMIAWAVIPF), 115–135 (VAILYVFAVSSLEVYGVIMGG), 161–181 (IGLIIIGVILSTGSMNFGDIV), 187–207 (GWGFFGWYWLPHFPMVFLFFI), 248–268 (YIAIFLMCALTSLLFFGGWLS), 277–297 (VLWMVAKMAFFFFIFAMVKAI), and 309–329 (LGWKVFLPFSLVWVVFVAFAA).

This sequence belongs to the complex I subunit 1 family. As to quaternary structure, NDH-1 is composed of 14 different subunits. Subunits NuoA, H, J, K, L, M, N constitute the membrane sector of the complex.

It localises to the cell inner membrane. The enzyme catalyses a quinone + NADH + 5 H(+)(in) = a quinol + NAD(+) + 4 H(+)(out). Its function is as follows. NDH-1 shuttles electrons from NADH, via FMN and iron-sulfur (Fe-S) centers, to quinones in the respiratory chain. The immediate electron acceptor for the enzyme in this species is believed to be ubiquinone. Couples the redox reaction to proton translocation (for every two electrons transferred, four hydrogen ions are translocated across the cytoplasmic membrane), and thus conserves the redox energy in a proton gradient. This subunit may bind ubiquinone. The polypeptide is NADH-quinone oxidoreductase subunit H (Ruegeria pomeroyi (strain ATCC 700808 / DSM 15171 / DSS-3) (Silicibacter pomeroyi)).